Here is a 384-residue protein sequence, read N- to C-terminus: Galactokinase (384 aa).

34–37 serves as a coordination point for substrate; that stretch reads EHTD. 123 to 129 contacts ATP; that stretch reads SSGLSSS. The Mg(2+) site is built by Ser129 and Glu161. The Proton acceptor role is filled by Asp173. Tyr222 is a substrate binding site.

This sequence belongs to the GHMP kinase family. GalK subfamily.

The protein localises to the cytoplasm. The enzyme catalyses alpha-D-galactose + ATP = alpha-D-galactose 1-phosphate + ADP + H(+). It functions in the pathway carbohydrate metabolism; galactose metabolism. In terms of biological role, catalyzes the transfer of the gamma-phosphate of ATP to D-galactose to form alpha-D-galactose-1-phosphate (Gal-1-P). This chain is Galactokinase, found in Haemophilus influenzae (strain ATCC 51907 / DSM 11121 / KW20 / Rd).